The chain runs to 186 residues: UPF0301 protein Tgr7_2910 (186 aa).

This sequence belongs to the UPF0301 (AlgH) family.

This is UPF0301 protein Tgr7_2910 from Thioalkalivibrio sulfidiphilus (strain HL-EbGR7).